The following is a 281-amino-acid chain: UPF0294 protein VP2298 (281 aa).

The protein belongs to the UPF0294 family.

It is found in the cytoplasm. The sequence is that of UPF0294 protein VP2298 from Vibrio parahaemolyticus serotype O3:K6 (strain RIMD 2210633).